Reading from the N-terminus, the 320-residue chain is MSRTSDGNTAELWVPTGSATVRVPGKVNLYLAVGDRRDDGYHELTTVFHAVSLVDEVTVRNADLLSLEVVGEGADRLPTDKRNLAWQAAELMAEHVGRAPDVSIFIDKSIPVAGGMAGGSADAAAVLVAMNSLWELNLPRRDLRMLAARLGSDVPFALHGGTALGTGRGEELATVLSRNTFHWVLAFARSGLSTPAVFTELDRLRDVGSPPRLAEPGPVLAALAAGDPEQLAPLLGNEMQAAAVSLDPALRRALRAGVEAGALAGIVSGSGPTCAFLCRTAESALDVSAQLSGAGVCRTVRIATGPVPGARVVPTPGIAE.

The active site involves Lys26. Residue 111–121 coordinates ATP; the sequence is PVAGGMAGGSA. Residue Asp153 is part of the active site.

The protein belongs to the GHMP kinase family. IspE subfamily.

It carries out the reaction 4-CDP-2-C-methyl-D-erythritol + ATP = 4-CDP-2-C-methyl-D-erythritol 2-phosphate + ADP + H(+). It functions in the pathway isoprenoid biosynthesis; isopentenyl diphosphate biosynthesis via DXP pathway; isopentenyl diphosphate from 1-deoxy-D-xylulose 5-phosphate: step 3/6. Functionally, catalyzes the phosphorylation of the position 2 hydroxy group of 4-diphosphocytidyl-2C-methyl-D-erythritol. This is 4-diphosphocytidyl-2-C-methyl-D-erythritol kinase from Mycobacterium marinum (strain ATCC BAA-535 / M).